The sequence spans 387 residues: Prostatic acid phosphatase (387 aa).

The N-terminal stretch at 1-34 (MRNAALLMTRATSLRLSLLLLLSFLPDLDGGVRA) is a signal peptide. Position 45 (R45) interacts with substrate. H46 serves as the catalytic Nucleophile. Substrate is bound at residue R49. The N-linked (GlcNAc...) asparagine glycan is linked to N96. A substrate-binding site is contributed by R113. Disulfide bonds link C163/C374, C217/C315, and C349/C353. An N-linked (GlcNAc...) asparagine glycan is attached at N222. Position 291 (H291) interacts with substrate. The active-site Proton donor is the D292. N335 carries N-linked (GlcNAc...) asparagine glycosylation.

The protein belongs to the histidine acid phosphatase family. As to quaternary structure, homodimer; dimer formation is required for phosphatase activity.

Its subcellular location is the secreted. It carries out the reaction a phosphate monoester + H2O = an alcohol + phosphate. The catalysed reaction is 1-(9Z-octadecenoyl)-sn-glycero-3-phosphate + H2O = 1-(9Z-octadecenoyl)-sn-glycerol + phosphate. The enzyme catalyses O-phospho-L-tyrosyl-[protein] + H2O = L-tyrosyl-[protein] + phosphate. Its function is as follows. A non-specific tyrosine phosphatase that dephosphorylates a diverse number of substrates under acidic conditions (pH 4-6) including alkyl, aryl, and acyl orthophosphate monoesters and phosphorylated proteins. Has lipid phosphatase activity and inactivates lysophosphatidic acid in seminal plasma. The polypeptide is Prostatic acid phosphatase (ACP3) (Bos taurus (Bovine)).